Reading from the N-terminus, the 260-residue chain is Sperm microtubule inner protein 6 (260 aa).

This sequence belongs to the SPMIP6 family. As to quaternary structure, microtubule inner protein component of sperm flagellar doublet microtubules. Interacts with alpha-tubulin. In terms of tissue distribution, testis-specific, expressed exclusively in germ cells (at protein level). Testis-specific. As to expression, expressed in both lung and testis.

The protein resides in the cytoplasm. Its subcellular location is the cytoskeleton. It localises to the nucleus. The protein localises to the mitochondrion. It is found in the flagellum axoneme. In terms of biological role, may participate in intramanchette transport and midpiece formation of the sperm tail. May play a potential role in somatic cell proliferation. This Mus musculus (Mouse) protein is Sperm microtubule inner protein 6 (SPMIP6).